The following is a 443-amino-acid chain: Tol-Pal system protein TolB (443 aa).

An N-terminal signal peptide occupies residues 1 to 18 (MRNIVYFILTLFSLTSYA).

It belongs to the TolB family. As to quaternary structure, the Tol-Pal system is composed of five core proteins: the inner membrane proteins TolA, TolQ and TolR, the periplasmic protein TolB and the outer membrane protein Pal. They form a network linking the inner and outer membranes and the peptidoglycan layer.

It is found in the periplasm. Part of the Tol-Pal system, which plays a role in outer membrane invagination during cell division and is important for maintaining outer membrane integrity. This chain is Tol-Pal system protein TolB, found in Rickettsia prowazekii (strain Madrid E).